Consider the following 314-residue polypeptide: tRNA dimethylallyltransferase (314 aa).

15–22 (GPTATGKS) contributes to the ATP binding site. 17–22 (TATGKS) is a binding site for substrate. Residues 40–43 (DSML) are interaction with substrate tRNA.

The protein belongs to the IPP transferase family. As to quaternary structure, monomer. Mg(2+) is required as a cofactor.

The enzyme catalyses adenosine(37) in tRNA + dimethylallyl diphosphate = N(6)-dimethylallyladenosine(37) in tRNA + diphosphate. In terms of biological role, catalyzes the transfer of a dimethylallyl group onto the adenine at position 37 in tRNAs that read codons beginning with uridine, leading to the formation of N6-(dimethylallyl)adenosine (i(6)A). This Pelotomaculum thermopropionicum (strain DSM 13744 / JCM 10971 / SI) protein is tRNA dimethylallyltransferase.